Reading from the N-terminus, the 575-residue chain is Hemagglutinin-neuraminidase (575 aa).

The Intravirion portion of the chain corresponds to 1-34 (MAEKGKTNSSYWSTTRNDNSTVNTYIDTPAGKTH). A helical membrane pass occupies residues 35 to 55 (IWLLIATTMHTILSFIIMILC). Residues 56 to 575 (IDLIIKQDTC…SIPKICKITS (520 aa)) lie on the Virion surface side of the membrane. An N-linked (GlcNAc...) asparagine; by host glycan is attached at Asn-77. Disulfide bonds link Cys-192/Cys-216, Cys-258/Cys-271, Cys-357/Cys-469, and Cys-463/Cys-473. Residues 254–259 (NRKSCS) form an involved in neuraminidase activity region. Asn-499 and Asn-511 each carry an N-linked (GlcNAc...) asparagine; by host glycan. Residues Cys-535 and Cys-544 are joined by a disulfide bond.

Belongs to the paramyxoviruses hemagglutinin-neuraminidase family. As to quaternary structure, homotetramer; composed of disulfide-linked homodimers. Interacts with F protein trimer.

The protein localises to the virion membrane. It is found in the host cell membrane. It carries out the reaction Hydrolysis of alpha-(2-&gt;3)-, alpha-(2-&gt;6)-, alpha-(2-&gt;8)- glycosidic linkages of terminal sialic acid residues in oligosaccharides, glycoproteins, glycolipids, colominic acid and synthetic substrates.. Its function is as follows. Attaches the virus to sialic acid-containing cell receptors and thereby initiating infection. Binding of HN protein to the receptor induces a conformational change that allows the F protein to trigger virion/cell membranes fusion. In terms of biological role, neuraminidase activity ensures the efficient spread of the virus by dissociating the mature virions from the neuraminic acid containing glycoproteins. The chain is Hemagglutinin-neuraminidase (HN) from Human parainfluenza 1 virus (strain Washington/1957) (HPIV-1).